Reading from the N-terminus, the 279-residue chain is MKAKTDFFHMKQAGEPIVMVTAYDFPSAKLAEQAGVDMILVGDSLGMVVLGYDSTIPVTVDDMIHHTKAVRRGAPNTFIVTDMPFMSYHASKEEALQNARRIMQESGANAVKVEGADEVVDMIAALTKAGVPVVAHLGLTPQSVGVLGGYKVQGKDAESAKKLLDDAKQCEQAGAIALVLECVPKQLGAAMARELTIPVIGIGAGAEVDGQVLVYHDLLGYGVTRVPKFVKQYASIQETIVEALANYVADVKLRQFPEPAHTFTMKEEEWVALYGGKQG.

Residues Asp43 and Asp82 each coordinate Mg(2+). Residues 43–44 (DS), Asp82, and Lys112 contribute to the 3-methyl-2-oxobutanoate site. Mg(2+) is bound at residue Glu114. Glu181 functions as the Proton acceptor in the catalytic mechanism.

The protein belongs to the PanB family. In terms of assembly, homodecamer; pentamer of dimers. Requires Mg(2+) as cofactor.

It is found in the cytoplasm. The catalysed reaction is 3-methyl-2-oxobutanoate + (6R)-5,10-methylene-5,6,7,8-tetrahydrofolate + H2O = 2-dehydropantoate + (6S)-5,6,7,8-tetrahydrofolate. Its pathway is cofactor biosynthesis; (R)-pantothenate biosynthesis; (R)-pantoate from 3-methyl-2-oxobutanoate: step 1/2. In terms of biological role, catalyzes the reversible reaction in which hydroxymethyl group from 5,10-methylenetetrahydrofolate is transferred onto alpha-ketoisovalerate to form ketopantoate. The sequence is that of 3-methyl-2-oxobutanoate hydroxymethyltransferase from Geobacillus kaustophilus (strain HTA426).